Reading from the N-terminus, the 609-residue chain is UvrABC system protein C (609 aa).

The GIY-YIG domain occupies 16–94 (SSAGVYRMYD…IKQYMPKYNV (79 aa)). The UVR domain occupies 203–238 (KQVISELVAKMEEAAGQQAYEQAARFRDQIMALRRV).

It belongs to the UvrC family. In terms of assembly, interacts with UvrB in an incision complex.

The protein resides in the cytoplasm. The UvrABC repair system catalyzes the recognition and processing of DNA lesions. UvrC both incises the 5' and 3' sides of the lesion. The N-terminal half is responsible for the 3' incision and the C-terminal half is responsible for the 5' incision. This Shewanella sp. (strain ANA-3) protein is UvrABC system protein C.